The following is a 363-amino-acid chain: MAGNSIGQLFRVTTCGESHGVGLMAIVDGVPPGLALTEEDLQKDLDRRKPGTSKFATQRKEPDQVEIISGVFEGKTTGTPIGLLIRNTDQKSKDYGNIAQTFRPGHADYTYTQKYGFRDYRGGGRSSARETAMRVAAGAIAKKYLAEKFGVVIRGHVTQIGNEVAEKLDWNEVPNNPFFCGDVDAVPRFEALVTSLREQGTSCGAKLEILAEKVPVGWGEPVFDRLDADIAHAMMSINAVKGVEIGDGFAVAGQFGHETRDELTSHGFLANHAGGILGGISSGQTIRVAIALKPTASITTPGKTINLNREDTDVLTKGRHDPCVGVRATPIAEAMLAIVLMDHFLRHRAQNADVVPPFAPIEP.

R48 serves as a coordination point for NADP(+). Residues 125-127, 238-239, G278, 293-297, and R319 contribute to the FMN site; these read RSS, NA, and KPTAS.

It belongs to the chorismate synthase family. In terms of assembly, homotetramer. FMNH2 serves as cofactor.

The catalysed reaction is 5-O-(1-carboxyvinyl)-3-phosphoshikimate = chorismate + phosphate. It functions in the pathway metabolic intermediate biosynthesis; chorismate biosynthesis; chorismate from D-erythrose 4-phosphate and phosphoenolpyruvate: step 7/7. Catalyzes the anti-1,4-elimination of the C-3 phosphate and the C-6 proR hydrogen from 5-enolpyruvylshikimate-3-phosphate (EPSP) to yield chorismate, which is the branch point compound that serves as the starting substrate for the three terminal pathways of aromatic amino acid biosynthesis. This reaction introduces a second double bond into the aromatic ring system. This Acinetobacter baumannii (strain ACICU) protein is Chorismate synthase.